Reading from the N-terminus, the 706-residue chain is K(+)-insensitive pyrophosphate-energized proton pump (706 aa).

The next 5 helical transmembrane spans lie at Met-1 to Ala-21, Ile-62 to Ile-82, Gly-83 to Val-103, Gly-128 to Tyr-148, and Val-164 to Phe-184. Lys-186 provides a ligand contact to substrate. Asp-189, Asp-193, Asn-216, and Asp-219 together coordinate Mg(2+). Transmembrane regions (helical) follow at residues Leu-231–Ala-251, Thr-261–Val-281, Ile-298–Phe-318, Gly-328–Ile-348, Ile-376–Leu-398, and Ala-412–Val-432. Residue Asp-434 coordinates Mg(2+). Transmembrane regions (helical) follow at residues Ala-465–Ala-485, Tyr-516–Met-536, Ile-585–Ile-605, and Ala-616–Ile-636. 3 residues coordinate Ca(2+): Asp-646, Asp-672, and Asp-676. Lys-679 lines the substrate pocket. Residues Ala-685–Ala-705 form a helical membrane-spanning segment.

This sequence belongs to the H(+)-translocating pyrophosphatase (TC 3.A.10) family. K(+)-insensitive subfamily. As to quaternary structure, homodimer. It depends on Mg(2+) as a cofactor.

The protein localises to the cell inner membrane. The enzyme catalyses diphosphate + H2O + H(+)(in) = 2 phosphate + 2 H(+)(out). Its function is as follows. Proton pump that utilizes the energy of pyrophosphate hydrolysis as the driving force for proton movement across the membrane. Generates a proton motive force. This chain is K(+)-insensitive pyrophosphate-energized proton pump, found in Bradyrhizobium diazoefficiens (strain JCM 10833 / BCRC 13528 / IAM 13628 / NBRC 14792 / USDA 110).